The chain runs to 757 residues: Catalase-peroxidase 2 (757 aa).

Residues 1-26 form the signal peptide; it reads MKHPLFNQKVLAGFVSMLLISGSAFA. The segment at residues 126–248 is a cross-link (tryptophyl-tyrosyl-methioninium (Trp-Tyr) (with M-274)); it reads WHSAGTYRTL…LGATHMGLIY (123 aa). The active-site Proton acceptor is His127. The tryptophyl-tyrosyl-methioninium (Tyr-Met) (with W-126) cross-link spans 248–274; that stretch reads YVNPEGPKGVPDPLGSAKNIRVAFERM. A heme b-binding site is contributed by His289.

It belongs to the peroxidase family. Peroxidase/catalase subfamily. As to quaternary structure, homodimer or homotetramer. It depends on heme b as a cofactor. In terms of processing, formation of the three residue Trp-Tyr-Met cross-link is important for the catalase, but not the peroxidase activity of the enzyme.

It carries out the reaction H2O2 + AH2 = A + 2 H2O. The enzyme catalyses 2 H2O2 = O2 + 2 H2O. Bifunctional enzyme with both catalase and broad-spectrum peroxidase activity. This chain is Catalase-peroxidase 2, found in Shewanella frigidimarina (strain NCIMB 400).